The chain runs to 389 residues: Sulfate adenylyltransferase (389 aa).

This sequence belongs to the sulfate adenylyltransferase family.

The enzyme catalyses sulfate + ATP + H(+) = adenosine 5'-phosphosulfate + diphosphate. The protein operates within sulfur metabolism; hydrogen sulfide biosynthesis; sulfite from sulfate: step 1/3. This is Sulfate adenylyltransferase from Desulforamulus reducens (strain ATCC BAA-1160 / DSM 100696 / MI-1) (Desulfotomaculum reducens).